Reading from the N-terminus, the 182-residue chain is MSNQELKDNMHKSVEATQRNFATIRTGRANPSLLDRINVEYYGTETPLKSLATISTPDSQTIAIQPFDNGSMGLIEKAIATSDLGLTPNNDGKIIRINVPPLTEERRKEFCKLAARYAEEGKVALRNIRRDAIDKVKKLEKDAELSKDQSHDEQDGIQKLTDTFITEIEKYLAEKEADILKV.

Belongs to the RRF family.

The protein resides in the cytoplasm. In terms of biological role, responsible for the release of ribosomes from messenger RNA at the termination of protein biosynthesis. May increase the efficiency of translation by recycling ribosomes from one round of translation to another. The chain is Ribosome-recycling factor from Prochlorococcus marinus (strain MIT 9313).